The sequence spans 227 residues: Cytidylate kinase (227 aa).

10–18 (GPSGSGKGT) contacts ATP.

Belongs to the cytidylate kinase family. Type 1 subfamily.

The protein resides in the cytoplasm. The enzyme catalyses CMP + ATP = CDP + ADP. It carries out the reaction dCMP + ATP = dCDP + ADP. The polypeptide is Cytidylate kinase (Acinetobacter baylyi (strain ATCC 33305 / BD413 / ADP1)).